The chain runs to 339 residues: Ketol-acid reductoisomerase (NADP(+)) (339 aa).

The region spanning 1 to 182 (MRVYYDRDAD…GGGRAGIIET (182 aa)) is the KARI N-terminal Rossmann domain. Residues 24-27 (YGSQ), Arg-48, Ser-51, Ser-53, and 83-86 (DELQ) each bind NADP(+). The active site involves His-108. Gly-134 serves as a coordination point for NADP(+). The KARI C-terminal knotted domain occupies 183–328 (TFREECETDL…AKLRDMMPWI (146 aa)). Mg(2+)-binding residues include Asp-191, Glu-195, Glu-227, and Glu-231. A substrate-binding site is contributed by Ser-252.

It belongs to the ketol-acid reductoisomerase family. Mg(2+) serves as cofactor.

The catalysed reaction is (2R)-2,3-dihydroxy-3-methylbutanoate + NADP(+) = (2S)-2-acetolactate + NADPH + H(+). It carries out the reaction (2R,3R)-2,3-dihydroxy-3-methylpentanoate + NADP(+) = (S)-2-ethyl-2-hydroxy-3-oxobutanoate + NADPH + H(+). The protein operates within amino-acid biosynthesis; L-isoleucine biosynthesis; L-isoleucine from 2-oxobutanoate: step 2/4. Its pathway is amino-acid biosynthesis; L-valine biosynthesis; L-valine from pyruvate: step 2/4. Involved in the biosynthesis of branched-chain amino acids (BCAA). Catalyzes an alkyl-migration followed by a ketol-acid reduction of (S)-2-acetolactate (S2AL) to yield (R)-2,3-dihydroxy-isovalerate. In the isomerase reaction, S2AL is rearranged via a Mg-dependent methyl migration to produce 3-hydroxy-3-methyl-2-ketobutyrate (HMKB). In the reductase reaction, this 2-ketoacid undergoes a metal-dependent reduction by NADPH to yield (R)-2,3-dihydroxy-isovalerate. The polypeptide is Ketol-acid reductoisomerase (NADP(+)) (Nitrobacter hamburgensis (strain DSM 10229 / NCIMB 13809 / X14)).